The sequence spans 604 residues: MAIEFGDHSSGFHHTEVIRFINNEVLKNGGSSEFYTTFRSRSWNEIEDQLRTILVDPKVPRSLKRACTWSALALSVRVAARQRQQQARRVWRLQDQVGEHESASWTLVSELQRLREERDQAAAQLLCTQIILQEAMDEREILRGRLLQAKRSALPVVPERGMEYGKTSLLSFEEKELGDLEFIGSQNMSHLEAQIPILSCLPGLSSPWVQAMDPFLQMTMAHPVPLKAKFSLEFSFSTPVPCPALMDSEATATAMITGLPQIAPSGIQPSSLCVTLESQETIASALDQICPRQKECSEILQDVSHLADSISCCEGEGPEKPQGTSLHGDSSNNSHKDNQAIPQIMAATEKKNLMMHQGTAAVEVNSNHSIKEEPVMPKGISSQGNKTSSTKKKRPKISRRVVGLIESISHNTQCVSVTPQETHTQVNKTTSTLKTYPGNLLRKPDQGKILSCNQKEDSKTLQRLTDLGEGTRNCQKEDTFQQTTCLNAGVSPNEKKMPQGTGKNQSQRQKEEPNSFQANHPRKCKSYLMNKYPKIQLATKQRVKQPEGIKSLESKQPQETKSSESKQQEKPLSHRTSANCICPSSKTVNRSWYKGCYKCAKTSA.

4 disordered regions span residues glutamate 314–aspartate 337, proline 374–isoleucine 397, cysteine 485–lysine 523, and alanine 538–cysteine 580. The segment covering glutamine 322–asparagine 333 has biased composition (polar residues). Basic and acidic residues predominate over residues lysine 544–leucine 572.

It belongs to the TEX13 family.

Plays a role in transcriptional repression. In Mus musculus (Mouse), this protein is Testis-expressed protein 13C-1.